Consider the following 437-residue polypeptide: Glutamate-1-semialdehyde 2,1-aminomutase (437 aa).

Lys-273 is subject to N6-(pyridoxal phosphate)lysine.

Belongs to the class-III pyridoxal-phosphate-dependent aminotransferase family. HemL subfamily. Homodimer. It depends on pyridoxal 5'-phosphate as a cofactor.

It localises to the cytoplasm. The catalysed reaction is (S)-4-amino-5-oxopentanoate = 5-aminolevulinate. It participates in porphyrin-containing compound metabolism; protoporphyrin-IX biosynthesis; 5-aminolevulinate from L-glutamyl-tRNA(Glu): step 2/2. This is Glutamate-1-semialdehyde 2,1-aminomutase from Chlamydia caviae (strain ATCC VR-813 / DSM 19441 / 03DC25 / GPIC) (Chlamydophila caviae).